Consider the following 344-residue polypeptide: Interactor of constitutive active ROPs 1 (344 aa).

Disordered regions lie at residues 1 to 74 (MPRP…ESQL), 92 to 139 (EAVK…KETD), 186 to 218 (HESLGKENESLKNQLSDSASEISNVKANEDEMV), and 307 to 344 (FMDPPGMADDYDDGLGSGKRKSSGMKMFGELWRKKGQK). The segment covering 19 to 29 (SSSSTSDSNHS) has biased composition (low complexity). Residues 60–108 (QKKLGGRISDLESQLGQAQEELRLLKEQLANAEAVKKQAQDELHKKSKK) adopt a coiled-coil conformation. Composition is skewed to basic and acidic residues over residues 93-103 (AVKKQAQDELH), 114-139 (RVEESATEAERIDRDEIPGDVQKETD), and 186-195 (HESLGKENES). Residues 145 to 273 (VEKIAVEEEE…EQWRKAADAA (129 aa)) adopt a coiled-coil conformation. A compositionally biased stretch (polar residues) spans 196-211 (LKNQLSDSASEISNVK).

The protein belongs to the ICR family. Homooligomer. Interacts with ARAC3, ARAC4, ARAC8, ARAC11 and SEC3A, but not with ICR2 or EXO70A1. As to expression, expressed in mature and germinating pollen. Expressed throughout the embryo but not in the hypophysis and quiescent center (QC). In roots, absent from the QC and the stem cells.

It localises to the cell membrane. Its subcellular location is the nucleus. Acts as a scaffold, mediating interaction of ROPs with different proteins. Required for primary and adventitious root maintenance, but not for their formation. Promotes the stabilization of ARAC11 on the plasma membrane of the pollen tube initiation site but not the activation of ARAC11. Regulates directionality of polar auxin transport, and is required for the formation of a stable auxin maximum and tip localized auxin gradient during embryogenesis, organogenesis, and meristem activity. Involved in exocytosis and in the recycling of PIN proteins back to the plasma membrane. This chain is Interactor of constitutive active ROPs 1 (ICR1), found in Arabidopsis thaliana (Mouse-ear cress).